Here is a 101-residue protein sequence, read N- to C-terminus: Putative septation protein SpoVG (101 aa).

The protein belongs to the SpoVG family.

In terms of biological role, could be involved in septation. The sequence is that of Putative septation protein SpoVG from Staphylococcus saprophyticus subsp. saprophyticus (strain ATCC 15305 / DSM 20229 / NCIMB 8711 / NCTC 7292 / S-41).